The sequence spans 28 residues: Ranatuerin-2LT (28 aa).

A disulfide bridge connects residues cysteine 23 and cysteine 28.

As to expression, expressed by the skin glands.

The protein resides in the secreted. Has antibacterial activity. This is Ranatuerin-2LT from Rana latastei (Italian agile frog).